The primary structure comprises 700 residues: Calpain-2 catalytic subunit (700 aa).

At alanine 2 the chain carries N-acetylalanine. Residues 2–19 constitute a propeptide, anchors to the small subunit; sequence AGIAIKLAKDREAAEGLG. In terms of domain architecture, Calpain catalytic spans 45–344; it reads LFQDPSFPAL…YSRLEICNLT (300 aa). Ca(2+)-binding residues include isoleucine 89, glycine 91, and aspartate 96. Cysteine 105 is a catalytic residue. Ca(2+) contacts are provided by glutamate 175, glutamine 229, and lysine 230. Active-site residues include histidine 262 and asparagine 286. Ca(2+)-binding residues include glutamate 292, aspartate 299, glutamine 319, and glutamate 323. The domain III stretch occupies residues 345–514; it reads PDTLTCDSYK…KKADYQAVDD (170 aa). The tract at residues 515 to 529 is linker; it reads EIEANIEEIDANEED. The segment at 530–700 is domain IV; it reads IDDGFRRLFV…LASWLSFSVL (171 aa). Ca(2+) is bound by residues alanine 542, aspartate 545, glutamate 547, glutamate 552, aspartate 585, aspartate 587, serine 589, lysine 591, glutamate 596, aspartate 615, aspartate 617, serine 619, threonine 621, glutamate 626, aspartate 658, and asparagine 661. 2 consecutive EF-hand domains span residues 572-605 and 602-637; these read FSIE…TKIQ and TKIQ…AGFK.

It belongs to the peptidase C2 family. Forms a heterodimer with a small (regulatory) subunit (CAPNS1). Interacts with CPEB3; this leads to cleavage of CPEB3. Requires Ca(2+) as cofactor. In terms of tissue distribution, ubiquitous.

It is found in the cytoplasm. The protein resides in the cell membrane. It catalyses the reaction Broad endopeptidase specificity.. With respect to regulation, activated by 200-1000 micromolar concentrations of calcium and inhibited by calpastatin. Functionally, calcium-regulated non-lysosomal thiol-protease which catalyzes limited proteolysis of substrates involved in cytoskeletal remodeling and signal transduction. Proteolytically cleaves MYOC at 'Arg-226'. Proteolytically cleaves CPEB3 following neuronal stimulation which abolishes CPEB3 translational repressor activity, leading to translation of CPEB3 target mRNAs. The sequence is that of Calpain-2 catalytic subunit (Capn2) from Mus musculus (Mouse).